Consider the following 1118-residue polypeptide: Sodium-driven chloride bicarbonate exchanger (1118 aa).

Disordered regions lie at residues 1-23 and 58-97; these read MEIKDQGAQMEPLLPTRNDEEAV and GRKSHRRHRHRGHKHRKRDRERDSGLEDGRESPSFDTPSQ. Over 1 to 509 the chain is Cytoplasmic; sequence MEIKDQGAQM…DFRDAFSLQC (509 aa). Positions 59 to 76 are enriched in basic residues; sequence RKSHRRHRHRGHKHRKRD. Residues 77 to 90 are compositionally biased toward basic and acidic residues; that stretch reads RERDSGLEDGRESP. S89 is subject to Phosphoserine. At T94 the chain carries Phosphothreonine. Zn(2+) contacts are provided by H221 and H223. Disordered regions lie at residues 269–310 and 457–476; these read AENK…KGPP and NGTAAHGEAEPHGGHSGPEL. S276 bears the Phosphoserine mark. Residues 510–530 traverse the membrane as a helical segment; that stretch reads LASFLFLYCACMSPVITFGGL. Residues 531-538 lie on the Extracellular side of the membrane; that stretch reads LGEATEGR. The helical transmembrane segment at 539 to 559 threads the bilayer; it reads ISAIESLFGASMTGIAYSLFG. Topologically, residues 560 to 562 are cytoplasmic; the sequence is GQP. A helical transmembrane segment spans residues 563–583; the sequence is LTILGSTGPVLVFEKILFKFC. Over 584 to 596 the chain is Extracellular; it reads KEYGLSYLSLRAS. A helical transmembrane segment spans residues 597-617; sequence IGLWTATLCIILVATDASSLV. Residues 618–626 lie on the Cytoplasmic side of the membrane; sequence CYITRFTEE. Residues 627 to 647 form a helical membrane-spanning segment; sequence AFASLICIIFIYEALEKLFEL. Residues 648 to 720 are Extracellular-facing; that stretch reads SETYPINMHN…VGRACGHGHP (73 aa). Residues N677, N687, and N697 are each glycosylated (N-linked (GlcNAc...) asparagine). The chain crosses the membrane as a helical span at residues 721-741; that stretch reads YVPDVLFWSVILFFSTVTMSA. At 742-762 the chain is on the cytoplasmic side; sequence TLKQFKTSRYFPTKVRSIVSD. A helical membrane pass occupies residues 763–783; sequence FAVFLTILCMVLIDYAIGIPS. Residues 784-809 are Extracellular-facing; that stretch reads PKLQVPSVFKPTRDDRGWFVTPLGPN. The helical transmembrane segment at 810–830 threads the bilayer; that stretch reads PWWTIIAAIIPALLCTILIFM. Topologically, residues 831–855 are cytoplasmic; the sequence is DQQITAVIINRKEHKLKKGCGYHLD. A helical transmembrane segment spans residues 856–876; that stretch reads LLMVAVMLGVCSIMGLPWFVA. The Extracellular portion of the chain corresponds to 877-912; it reads ATVLSITHVNSLKLESECSAPGEQPKFLGIREQRVT. A helical membrane pass occupies residues 913–933; the sequence is GLMIFILMGSSVFMTSILKFI. The Cytoplasmic segment spans residues 934-935; that stretch reads PM. A helical transmembrane segment spans residues 936 to 956; the sequence is PVLYGVFLYMGASSLKGIQLF. Residues 957–998 are Extracellular-facing; sequence DRIKLFWMPAKHQPDFIYLRHVPLRKVHLFTVIQMSCLGLLW. The helical transmembrane segment at 999–1019 threads the bilayer; that stretch reads IIKVSRAAIVFPMMVLALVFV. Over 1020-1118 the chain is Cytoplasmic; the sequence is RKLMDFLFTK…SRFPSKSSPS (99 aa). S1057 and S1085 each carry phosphoserine.

Belongs to the anion exchanger (TC 2.A.31) family. In terms of processing, N-glycosylated. In the brain, detected in cerebral cortex, subcortex, cerebellum, hippocampus and medulla (at protein level). In the cerebrum, expressed at high levels throughout the cortex, at lower levels in striatum and not detectable in the corpus callosum (at protein level). In the cerebellum, detected at high levels in the molecular layer but at very low levels in the granular layer (at protein level). In the central nervous system, detected in neurons in the olfactory bulb, cortex and cerebellum (at protein level). Within the hippocampus, abundantly expressed in CA3 pyramidal cells (at protein level). Strongly expressed in the retina with high levels in bipolar and amacrine cells (at protein level). Expressed in the epithelial cells of the choroid plexus. During embryonic development, expressed in neurons of the central nervous system. Also expressed in the peripheral nervous system and in non-neuronal tissues such as the dura and some epithelia including the acid-secreting epithelium of the stomach and the duodenal epithelium. In the embryonic retina, expression is restricted to the neuronal cell layer and the retinal pigment epithelium. As to expression, expressed at high levels in brain and at low levels in the pituitary, testis, kidney and ileum. Also expressed in pancreatic islets.

The protein resides in the basolateral cell membrane. The protein localises to the apical cell membrane. Its subcellular location is the cell projection. It is found in the dendrite. It localises to the axon. The protein resides in the perikaryon. The protein localises to the presynapse. Its subcellular location is the postsynapse. The enzyme catalyses 2 hydrogencarbonate(out) + chloride(in) + Na(+)(out) = 2 hydrogencarbonate(in) + chloride(out) + Na(+)(in). Zinc-binding negatively regulates its activity. Functionally, sodium/bicarbonate cotransporter which plays an important role in regulating intracellular pH. Has been shown to act as a sodium/bicarbonate cotransporter in exchange for intracellular chloride. Has also been shown to act as a sodium/biocarbonate cotransporter which is not responsible for net efflux of chloride, with the observed chloride efflux being due to chloride self-exchange. Controls neuronal pH and may contribute to the secretion of cerebrospinal fluid. Acting on presynaptic intracellular pH, it promotes GABA release, reduces the excitability of CA1 pyramidal neurons, and modulates short-term synaptic plasticity. Required in retinal cells to maintain normal pH which is necessary for normal vision. In the kidney, likely to mediate bicarbonate reclamation in the apical membrane of the proximal tubules. Its function is as follows. Sodium/bicarbonate cotransporter which mediates cotransport of sodium and bicarbonate in association with an efflux of intracellular chloride. The protein is Sodium-driven chloride bicarbonate exchanger of Mus musculus (Mouse).